The primary structure comprises 411 residues: Phosphoglycerate kinase (411 aa).

Residues 1-24 (MTGLCPLHQPSPLDHPHSGGTPMQ) form a disordered region. Residues 41-43 (DYN), Arg56, 79-82 (HFGR), Arg139, and Arg172 contribute to the substrate site. Residues Lys222, Gly310, Glu341, and 369 to 372 (GGDS) each bind ATP.

Belongs to the phosphoglycerate kinase family. In terms of assembly, monomer.

The protein localises to the cytoplasm. It carries out the reaction (2R)-3-phosphoglycerate + ATP = (2R)-3-phospho-glyceroyl phosphate + ADP. It participates in carbohydrate degradation; glycolysis; pyruvate from D-glyceraldehyde 3-phosphate: step 2/5. This is Phosphoglycerate kinase from Deinococcus radiodurans (strain ATCC 13939 / DSM 20539 / JCM 16871 / CCUG 27074 / LMG 4051 / NBRC 15346 / NCIMB 9279 / VKM B-1422 / R1).